The chain runs to 241 residues: Meiotically up-regulated gene 130 protein (241 aa).

The protein resides in the mitochondrion. In terms of biological role, has a role in meiosis. The chain is Meiotically up-regulated gene 130 protein (mug130) from Schizosaccharomyces pombe (strain 972 / ATCC 24843) (Fission yeast).